Here is a 555-residue protein sequence, read N- to C-terminus: Meiotic mRNA stability protein kinase SSN3 (555 aa).

Positions 75-463 (YEVIGYIAAG…AFNALEHKYF (389 aa)) constitute a Protein kinase domain. 81 to 89 (IAAGTYGKV) provides a ligand contact to ATP. Over residues 100-138 (TNSANGSSLNGTNAKIPQFDSTQPKSSSSMDMQANTNAL) the composition is skewed to polar residues. The disordered stretch occupies residues 100–166 (TNSANGSSLN…REDVSPHYNS (67 aa)). Lys-183 is a binding site for ATP. The Proton acceptor role is filled by Asp-286.

The protein belongs to the protein kinase superfamily. CMGC Ser/Thr protein kinase family. CDC2/CDKX subfamily. As to quaternary structure, component of the SRB8-11 complex which consists of SRB8, SSN2/SRB9, SSN3/SRB10 and SSN8/SRB11. The SRB8-11 complex associates with the Mediator complex. The SSN3/SRB10 and SSN8/SRB11 kinase-cyclin pair also associate with the RNA polymerase II holoenzyme. Interacts with TUP1.

The protein localises to the nucleus. The catalysed reaction is L-seryl-[protein] + ATP = O-phospho-L-seryl-[protein] + ADP + H(+). It carries out the reaction L-threonyl-[protein] + ATP = O-phospho-L-threonyl-[protein] + ADP + H(+). The enzyme catalyses [DNA-directed RNA polymerase] + ATP = phospho-[DNA-directed RNA polymerase] + ADP + H(+). In terms of biological role, component of the SRB8-11 complex. The SRB8-11 complex is a regulatory module of the Mediator complex which is itself involved in regulation of basal and activated RNA polymerase II-dependent transcription. The SRB8-11 complex may be involved in the transcriptional repression of a subset of genes regulated by Mediator. It may inhibit the association of the Mediator complex with RNA polymerase II to form the holoenzyme complex. The SRB8-11 complex phosphorylates the C-terminal domain (CTD) of the largest subunit of RNA polymerase II RPB1 at serines 2 and 5. The SSN3/SRB10 and SSN8/SRB11 kinase-cyclin pair may also positively and negatively regulate numerous transcriptional activators in response to changes in nutritional and physiological conditions. Phosphorylates GCN4, promoting its ubiquitin-mediated degradation, and MSN2, promoting its nuclear exclusion. Phosphorylates STE12, thereby promoting its degradation and inhibition of filamentous growth. Phosphorylates GAL4, and this phosphorylation is required for efficient galactose-inducible transcription. Also phosphorylates BDF1 and the TAF2 subunit of the TFIID complex. This is Meiotic mRNA stability protein kinase SSN3 (SSN3) from Saccharomyces cerevisiae (strain ATCC 204508 / S288c) (Baker's yeast).